The chain runs to 314 residues: MSADSSLSLPLSGTHRYRVTHRTEYRYSDVVTSSYGRGFLTPRNSLRQRCVAHRLTIDPAPADRSTSRDGYGNISSYFHVTEPHRTLTITSDSIVDVSPPPPGLYTSGPALQPWEAARPAGLPGSLATEFTLDLNPPEITDAVREYAAPSFLPKRPLVEVLRDLASRIYTDFTYRSGSTTISTGVNEVLLAREGVCQDFARLAIACLRANGLAACYVSGYLATDPPPGKDRMIGIDATHAWASVWTPQQPGRFEWLGLDPTNDQLVDQRYIVVGRGRDYADVPPLRGIIYTNSENSVIDVSVDVVPFEGDALHA.

The protein to M.leprae ML0607.

This is an uncharacterized protein from Mycobacterium bovis (strain ATCC BAA-935 / AF2122/97).